A 398-amino-acid chain; its full sequence is Phosphoglycerate kinase (398 aa).

Residues 21-23 (DFN), arginine 36, 59-62 (HLGR), arginine 119, and arginine 157 each bind substrate. ATP is bound by residues lysine 208, glycine 296, glutamate 327, and 354 to 357 (GGDS).

The protein belongs to the phosphoglycerate kinase family. In terms of assembly, monomer.

Its subcellular location is the cytoplasm. It catalyses the reaction (2R)-3-phosphoglycerate + ATP = (2R)-3-phospho-glyceroyl phosphate + ADP. The protein operates within carbohydrate degradation; glycolysis; pyruvate from D-glyceraldehyde 3-phosphate: step 2/5. This chain is Phosphoglycerate kinase, found in Streptococcus agalactiae serotype III (strain NEM316).